The primary structure comprises 437 residues: MLGDTTLKQLKDEISTLEYERYIKQLRYDEEASRTDLAVYIAPNQFIANWVKTKYGERLAHLFELSTGIRPKIEIRLGSLKKDVKSSSPKAGVSKGQKSTILNPSFTFDSFVVGNSNRFAYEVSQNVAKKQGIAYNPLLIYGGTGLGKTHLLNSIGNYNVAKGKSVIYVTSEQFLNDYLYHIRNNTMDRFRDKYRACDYLLIDDVQFFGGKPQIQEEFFHTFNELHNKNKQIVLTSDKTPKQIAGLEERLKSRFEWGMVSDIQPPELETKINIIKKKCEFDGIYLSNEIISYIATNMDNNIREIEGIIIKLNAYANLMNQEITLQFAKNVLKEQIKEERENITLENIIEVVSKELNVKPAEIKSKGRSKNIANARRIVIFLARTLTPNSMPSLAQFFGMKDHSSVSKAMKTVKTEIEEDANFKMVIEELKNKIKSRN.

Positions 1–69 are domain I, interacts with DnaA modulators; that stretch reads MLGDTTLKQL…AHLFELSTGI (69 aa). The domain II stretch occupies residues 69–100; that stretch reads IRPKIEIRLGSLKKDVKSSSPKAGVSKGQKST. The tract at residues 101-315 is domain III, AAA+ region; that stretch reads ILNPSFTFDS…GIIIKLNAYA (215 aa). Positions 145, 147, 148, and 149 each coordinate ATP. Residues 316–437 form a domain IV, binds dsDNA region; that stretch reads NLMNQEITLQ…ELKNKIKSRN (122 aa).

Belongs to the DnaA family. Oligomerizes as a right-handed, spiral filament on DNA at oriC.

It is found in the cytoplasm. Functionally, plays an essential role in the initiation and regulation of chromosomal replication. ATP-DnaA binds to the origin of replication (oriC) to initiate formation of the DNA replication initiation complex once per cell cycle. Binds the DnaA box (a 9 base pair repeat at the origin) and separates the double-stranded (ds)DNA. Forms a right-handed helical filament on oriC DNA; dsDNA binds to the exterior of the filament while single-stranded (ss)DNA is stabiized in the filament's interior. The ATP-DnaA-oriC complex binds and stabilizes one strand of the AT-rich DNA unwinding element (DUE), permitting loading of DNA polymerase. After initiation quickly degrades to an ADP-DnaA complex that is not apt for DNA replication. Binds acidic phospholipids. The chain is Chromosomal replication initiator protein DnaA from Wolinella succinogenes (strain ATCC 29543 / DSM 1740 / CCUG 13145 / JCM 31913 / LMG 7466 / NCTC 11488 / FDC 602W) (Vibrio succinogenes).